The chain runs to 185 residues: C-type lectin domain family 5 member A (185 aa).

Topologically, residues 1–4 (MNWH) are cytoplasmic. The chain crosses the membrane as a helical; Signal-anchor for type II membrane protein span at residues 5–27 (MIISGLIVVVLKIVGMTFFLLYF). Over 28–185 (PQIFGEHNVS…YRSICEKSAQ (158 aa)) the chain is Extracellular. Asparagine 35 and asparagine 55 each carry an N-linked (GlcNAc...) asparagine glycan. A disulfide bridge connects residues cysteine 68 and cysteine 79. The 107-residue stretch at 75 to 181 (HQGRCFFLST…CDVNYRSICE (107 aa)) folds into the C-type lectin domain. Residues asparagine 90, asparagine 117, asparagine 141, and asparagine 146 are each glycosylated (N-linked (GlcNAc...) asparagine). Intrachain disulfides connect cysteine 96-cysteine 180 and cysteine 158-cysteine 172.

As to quaternary structure, monomer. Homodimer. The majority of CLEC5A is expressed as a monomeric form on macrophages. Interacts with TYROBP/DAP12. The interaction with TYROBP is required for CLEC5 cell surface expression. Interacts with HCST/DAP10. Forms a CLEC5A/TYROBP/HCST trimolecular complex depending almost solely on TYROBP. N-glycosylated. Contains sialic acid residues. Constitutively expressed in monocytes and macrophages.

The protein localises to the cell membrane. Functionally, functions as a positive regulator of osteoclastogenesis. Cell surface receptor that signals via TYROBP. Regulates inflammatory responses. The protein is C-type lectin domain family 5 member A (CLEC5A) of Sus scrofa (Pig).